Reading from the N-terminus, the 231-residue chain is tRNA (guanine-N(1)-)-methyltransferase (231 aa).

S-adenosyl-L-methionine contacts are provided by residues glycine 112 and 132–137 (LGDFVL).

This sequence belongs to the RNA methyltransferase TrmD family. In terms of assembly, homodimer.

The protein localises to the cytoplasm. It catalyses the reaction guanosine(37) in tRNA + S-adenosyl-L-methionine = N(1)-methylguanosine(37) in tRNA + S-adenosyl-L-homocysteine + H(+). In terms of biological role, specifically methylates guanosine-37 in various tRNAs. This is tRNA (guanine-N(1)-)-methyltransferase from Microcystis aeruginosa (strain NIES-843 / IAM M-2473).